The chain runs to 611 residues: TANK-binding kinase 1-binding protein 1 (611 aa).

A homodimerization region spans residues 1 to 280 (MESMFEDDIS…QDLASNQSEC (280 aa)). The stretch at 48-162 (YGDIKERLGG…ALVETHLRQI (115 aa)) forms a coiled coil. Position 184 is a phosphoserine (serine 184). Residues 218–277 (TSVSVSELERRRLEEALEAAQGEARGAQLREEQLQAECERLQGELKQLQETRAQDLASNQ) are a coiled coil. The interval 281 to 330 (DMAWVKRVGDDQVNLALAYTELTEELGRLRELSSLQGRILRTLLQEQARN) is interaction with TBK1 and IKBKE. The tract at residues 328 to 437 (ARNAGQRHSP…PPPPPGERTL (110 aa)) is disordered. Over residues 346–361 (PACPSPSPPARPPPCA) the composition is skewed to pro residues. Residues 362–372 (PCQSPAAQRRS) show a composition bias toward low complexity. Phosphoserine occurs at positions 365, 372, 379, 385, 400, and 415. Over residues 389–406 (PSCPSPVPQRRSPVPPSC) the composition is skewed to pro residues. Positions 416–433 (PVPPSCPAPQPRPPPPPG) are enriched in pro residues. A phosphoserine mark is found at serine 500 and serine 530. The segment at 579-605 (IRSCPLCQLGFPVGYPDDALIKHIDSH) adopts a UBZ1-type zinc-finger fold. Zn(2+)-binding residues include cysteine 582, cysteine 585, histidine 601, and histidine 605.

Homodimer. May form a heterodimer with NAP1. Interacts with TKB1 and IKBKE. Weakly interacts with DDX3X.

Its function is as follows. Adapter protein which constitutively binds TBK1 and IKBKE playing a role in antiviral innate immunity. Essential for the efficient induction of IRF-dependent transcription following infection with Sendai virus. This chain is TANK-binding kinase 1-binding protein 1, found in Mus musculus (Mouse).